The sequence spans 276 residues: Undecaprenyl-diphosphatase (276 aa).

The next 7 membrane-spanning stretches (helical) occupy residues 40–60, 98–118, 121–141, 155–175, 200–220, 227–247, and 255–275; these read GLAF…TFFW, WLII…KDAI, IFRG…VLYY, MSFK…FPGI, FLLS…DIAT, VLLA…KLLM, and LDIF…LSVV.

It belongs to the UppP family.

The protein resides in the cell membrane. The enzyme catalyses di-trans,octa-cis-undecaprenyl diphosphate + H2O = di-trans,octa-cis-undecaprenyl phosphate + phosphate + H(+). Its function is as follows. Catalyzes the dephosphorylation of undecaprenyl diphosphate (UPP). The polypeptide is Undecaprenyl-diphosphatase (Methanosphaera stadtmanae (strain ATCC 43021 / DSM 3091 / JCM 11832 / MCB-3)).